We begin with the raw amino-acid sequence, 387 residues long: MGVSANLFVKQRGSTTALKQPKEIGFYSRTKDEEYLISDDTNLNYYYLPDAELDRKLDLSSGFQKFKDYYKDFEDRCSLRGLLETIESSERHKGKKINADIITFRGIARKLISCAFDSPSFNTVDLRIVSFNGQLFIKEVPEAVNAAKASSATEAGRNINQDLNVFTGYKFETLATLSNPLQYTPREVIEKRTKRIVSHGDEYISVVRTGVGNCKLILGAEVDCIFDFKENGRDNLKHYAELKCTQQVANISDTHKFERKLFRTWLQCFLVGIPRIIYGFKDDHYVLKTVEEFSTEEVPVLLKNNNPQVGSACLEAIKWYGLLTEWLLKMIPRDEDPHSQIRAFKLVFENNHLRLSEIEESDEEYSGLIDGEHILSNGFKEWRKSLK.

Residue Glu172 participates in a divalent metal cation binding. Ser198 carries the post-translational modification Phosphoserine. Glu221 is a binding site for substrate. Residues Asp223, Glu241, and Leu242 each contribute to the a divalent metal cation site. Residues Lys243 and Gln267 each coordinate substrate. An interaction with RAT1 region spans residues 273–387; it reads IPRIIYGFKD…GFKEWRKSLK (115 aa).

It belongs to the DXO/Dom3Z family. Interacts with RAT1, RTT103 and pre-60S ribosomal subunits. Interacts with RAT1; the interaction is direct, stabilizes RAT1 protein structure and stimulates its exoribonuclease activity. The interaction also stimulates RAI1 pyrophosphohydrolase activity, probably by recruiting it to mRNA substrates. The cofactor is a divalent metal cation.

It localises to the nucleus. It catalyses the reaction a 5'-end NAD(+)-phospho-ribonucleoside in mRNA + H2O = a 5'-end phospho-ribonucleoside in mRNA + NAD(+) + H(+). The enzyme catalyses a 5'-end (N(7)-methyl 5'-triphosphoguanosine)-ribonucleoside-ribonucleotide in mRNA + H2O = a (N(7)-methyl 5'-triphosphoguanosine)-nucleoside + a 5'-end phospho-ribonucleoside in mRNA + H(+). The catalysed reaction is a 5'-end triphospho-ribonucleoside in mRNA + H2O = a 5'-end phospho-ribonucleoside in mRNA + diphosphate + H(+). In terms of biological role, decapping enzyme for NAD-capped RNAs: specifically hydrolyzes the nicotinamide adenine dinucleotide (NAD) cap from a subset of RNAs by removing the entire NAD moiety from the 5'-end of an NAD-capped RNA. The NAD-cap is present at the 5'-end of some RNAs and snoRNAs. In contrast to the canonical 5'-end N7 methylguanosine (m7G) cap, the NAD cap promotes mRNA decay. Also acts as a non-canonical decapping enzyme that removes the entire cap structure of m7G capped or incompletely capped RNAs. Has decapping activity toward incomplete 5'-end m7G cap mRNAs such as unmethylated 5'-end-capped RNA (cap0), while it has no activity toward 2'-O-ribose methylated m7G cap (cap1). Also possesses RNA 5'-pyrophosphohydrolase activity by hydrolyzing the 5'-end triphosphate to release pyrophosphates. Stimulates exoribonuclease activity of RAT1, allowing it to degrade RNAs with stable secondary structure more effectively. Required for the processing of nuclear mRNA and rRNA precursors. May promote termination of transcription by RNA polymerase II. The sequence is that of Decapping nuclease RAI1 from Saccharomyces cerevisiae (strain ATCC 204508 / S288c) (Baker's yeast).